Here is a 256-residue protein sequence, read N- to C-terminus: Probable transcriptional regulatory protein cce_0894 (256 aa).

It belongs to the TACO1 family.

It localises to the cytoplasm. The chain is Probable transcriptional regulatory protein cce_0894 from Crocosphaera subtropica (strain ATCC 51142 / BH68) (Cyanothece sp. (strain ATCC 51142)).